A 924-amino-acid chain; its full sequence is LPS-assembly protein LptD (924 aa).

A signal peptide spans 1–33 (MAVKSLVFRRKFPLLVTGSLLALQPVAALTVQA). Positions 58–102 (NLPPRPAHTATSVSTAAAGSSVSGSGGETVEAEPTQRLVTESGGR) are disordered. The segment covering 66-90 (TATSVSTAAAGSSVSGSGGETVEAE) has biased composition (low complexity).

This sequence belongs to the LptD family. Component of the lipopolysaccharide transport and assembly complex. Interacts with LptE and LptA.

The protein resides in the cell outer membrane. In terms of biological role, together with LptE, is involved in the assembly of lipopolysaccharide (LPS) at the surface of the outer membrane. The chain is LPS-assembly protein LptD from Pseudomonas aeruginosa (strain UCBPP-PA14).